The chain runs to 409 residues: UPF0261 protein Spro_4740 (409 aa).

Belongs to the UPF0261 family.

This is UPF0261 protein Spro_4740 from Serratia proteamaculans (strain 568).